The sequence spans 1037 residues: Ribonuclease E (1037 aa).

3 disordered regions span residues 1–23, 47–90, and 106–369; these read MAEDAHTEDLSTQTPQQEGLPER, FDGR…ETPV, and VSEA…PILS. Over residues 47-67 the composition is skewed to basic and acidic residues; sequence FDGRQRSAHSTVDKADAERVR. Composition is skewed to low complexity over residues 68–90 and 106–126; these read AALTESPAAETPPEEAPAAETPV and VSEAGPAEPAEPAEPEAPAAE. Composition is skewed to acidic residues over residues 127 to 141 and 196 to 226; these read AEAEAETEVADEAET and VVDDEDEDDDTETGAESDFDSGADSDSDDDQ. The segment covering 230-242 has biased composition (basic residues); sequence PRRRRRGRRGRGR. Residues 248–284 show a composition bias toward acidic residues; the sequence is NDDATSDADTDSTEDQTDGDEQESGEDSDDSGDEDST. Basic residues predominate over residues 291–301; sequence RRRRRRRRRKS. A compositionally biased stretch (basic and acidic residues) spans 320 to 335; the sequence is VHERAPRTERSDKSDD. Residues 427–504 enclose the S1 motif domain; the sequence is GNIYLGIVQN…GHKGARLTTQ (78 aa). A coiled-coil region spans residues 561-589; the sequence is EDIRSDVERLQKRWSEIEAKAAEVTEKKA. Positions 694 and 738 each coordinate Mg(2+). Zn(2+) contacts are provided by cysteine 796 and cysteine 799. Residues 810-1037 are disordered; that stretch reads PIDSASSNGG…ARPAGPPSHD (228 aa). Over residues 834–843 the composition is skewed to basic residues; the sequence is RRGKRGKKGA. The segment covering 844 to 864 has biased composition (basic and acidic residues); sequence ARTEEVHVAKVPDHTPGEHPM. Residues 879–891 are compositionally biased toward acidic residues; that stretch reads EDHEDHEDHETAE. Residues 897-913 show a composition bias toward basic and acidic residues; that stretch reads EVRDDTRDEHDADERAH. Over residues 923 to 1006 the composition is skewed to acidic residues; sequence GDEDLDDSDE…DSDSDEDEEP (84 aa).

It belongs to the RNase E/G family. As to quaternary structure, assembles into a homotetramer formed by a dimer of dimers. Interacts with DNA-binding protein HhupB. It depends on Mg(2+) as a cofactor. Requires Zn(2+) as cofactor.

The protein resides in the cytoplasm. The enzyme catalyses Endonucleolytic cleavage of single-stranded RNA in A- and U-rich regions.. Functionally, endoribonuclease that plays a central role in RNA processing and decay. Plays a major role in pre-16S rRNA maturation, probably generating the mature 5'-end, and a minor role in pre-5S and pre-23S rRNA maturation. Probably also processes tRNA. RNase E and HupB jointly contribute to cellular adaptation to changing growth conditions and survival during antibiotic treatment. Overexpression or depletion leads to changes in gene expression; overexpression induces metabolic slowdown and cell stress while depleted strains grow less well than induced strains. The sequence is that of Ribonuclease E (rne) from Mycolicibacterium smegmatis (strain ATCC 700084 / mc(2)155) (Mycobacterium smegmatis).